The sequence spans 279 residues: GATA transcription factor 15 (279 aa).

The disordered stretch occupies residues 52–94 (AYDDHSTVTTSPSSPSSSSTGSVDCTLSLGTPSSRRAEPVAAA). Positions 58–74 (TVTTSPSSPSSSSTGSV) are enriched in low complexity. Residues 154 to 179 (CANCGTASTPLWRNGPRGPKSLCNAC) form a GATA-type zinc finger.

It belongs to the type IV zinc-finger family. Class B subfamily. In terms of tissue distribution, highly expressed in inflorescences. Expressed in vascular bundles of root stele within the elongation zones, of elongating upper internodes and of the junctions of leaf blades and sheaths.

Functionally, probable transcription factor that regulates organogenesis during transition from the vegetative to the reproductive phase. Regulates the expression of CYP78A11/PLA1, HD3A and MADS1 during reproductive development in rice. May act upstream of CYP78A11/PLA1 during panicle development. Acts independently of the photoperiodic and gibberellin signaling pathways. This Oryza sativa subsp. japonica (Rice) protein is GATA transcription factor 15.